Reading from the N-terminus, the 242-residue chain is uncharacterized protein (242 aa).

Residues 8–76 (TPLYIQLKQI…QGKGTFVKSP (69 aa)) form the HTH gntR-type domain. Positions 36–55 (ENELCTKYNVSRITVRKAIL) form a DNA-binding region, H-T-H motif.

This is an uncharacterized protein from Bacillus subtilis (strain 168).